A 487-amino-acid chain; its full sequence is Glutamyl-tRNA(Gln) amidotransferase subunit A (487 aa).

Catalysis depends on charge relay system residues Lys79 and Ser158. Ser182 serves as the catalytic Acyl-ester intermediate.

Belongs to the amidase family. GatA subfamily. Heterotrimer of A, B and C subunits.

The catalysed reaction is L-glutamyl-tRNA(Gln) + L-glutamine + ATP + H2O = L-glutaminyl-tRNA(Gln) + L-glutamate + ADP + phosphate + H(+). Functionally, allows the formation of correctly charged Gln-tRNA(Gln) through the transamidation of misacylated Glu-tRNA(Gln) in organisms which lack glutaminyl-tRNA synthetase. The reaction takes place in the presence of glutamine and ATP through an activated gamma-phospho-Glu-tRNA(Gln). The polypeptide is Glutamyl-tRNA(Gln) amidotransferase subunit A (Ehrlichia ruminantium (strain Welgevonden)).